Consider the following 627-residue polypeptide: Plasmepsin IX (627 aa).

The Cytoplasmic portion of the chain corresponds to 1-13 (MFFINFKKIKKKQ). A helical; Signal-anchor for type II membrane protein membrane pass occupies residues 14–34 (FPIYLTQHRIITVFLIFIYFI). Residues 35-627 (NLKDCFHINN…SSLHNKINNL (593 aa)) are Lumenal-facing. A Peptidase A1 domain is found at 228 to 605 (YVGYIQIGTP…NNNSSYVGIA (378 aa)). Catalysis depends on residues D246 and D495.

The protein belongs to the peptidase A1 family. Autocleaved into a p55 mature form.

It is found in the membrane. The protein resides in the cytoplasmic vesicle. It localises to the secretory vesicle. Its subcellular location is the rhoptry. With respect to regulation, inhibited by small molecule 49c. Inhibited by small molecule WM382. Its function is as follows. During the asexual blood stage, initiates the proteolytic maturation of several rhoptry proteins and thus, is required for merozoite invasion of host erythrocytes and probably the subsequent development of the ring-stage. Cleaves rhoptry associated protein 1 RAP1 and apical sushi protein ASP during schizont maturation. Also cleaves rhoptry protein RON3. The polypeptide is Plasmepsin IX (Plasmodium falciparum (isolate 3D7)).